The following is a 288-amino-acid chain: Probable proteasome subunit alpha type-7 (288 aa).

The residue at position 2 (Thr-2) is an N-acetylthreonine. The interval 247–288 (INGDDDEDEDDSDNVMSSDDENAPVATNANATTDQEGDIHLE) is disordered. Residues 249 to 268 (GDDDEDEDDSDNVMSSDDEN) show a composition bias toward acidic residues. Residues 269–279 (APVATNANATT) are compositionally biased toward low complexity.

It belongs to the peptidase T1A family. In terms of assembly, the 26S proteasome consists of a 20S proteasome core and two 19S regulatory subunits. The 20S proteasome core is composed of 28 subunits that are arranged in four stacked rings, resulting in a barrel-shaped structure. The two end rings are each formed by seven alpha subunits, and the two central rings are each formed by seven beta subunits. The catalytic chamber with the active sites is on the inside of the barrel. The alpha and beta forms are probably products of the same gene with different post-translational modifications.

Its subcellular location is the cytoplasm. The protein resides in the nucleus. Functionally, the proteasome degrades poly-ubiquitinated proteins in the cytoplasm and in the nucleus. It is essential for the regulated turnover of proteins and for the removal of misfolded proteins. The proteasome is a multicatalytic proteinase complex that is characterized by its ability to cleave peptides with Arg, Phe, Tyr, Leu, and Glu adjacent to the leaving group at neutral or slightly basic pH. It has an ATP-dependent proteolytic activity. The sequence is that of Probable proteasome subunit alpha type-7 (PRE10) from Saccharomyces cerevisiae (strain ATCC 204508 / S288c) (Baker's yeast).